Consider the following 377-residue polypeptide: MDPGPGLAALQAWAAKSPAYGAANQTVVDKVPPDMMHMIDPHWYQFPPMNPLWHALLGFTIGVLGFVSISGNGMVIYIFMSTKSLKTPSNLLVVNLAFSDFLMMCAMSPAMVVNCYYETWVWGPFACELYACAGSLFGCASIWTMTMIAFDRYNVIVKGIAAKPMTSNGALLRILGIWVFSLAWTLLPFFGWNRYVPEGNMTACGTDYLSKSWVSRSYILIYSVFVYFLPLLLIIYSYFFIVQAVAAHEKAMREQAKKMNVASLRSSEAANTSAECKLAKVALMTISLWFMAWTPYLVINYTGVFESAPISPLATIWGSLFAKANAVYNPIVYGISHPKYQAALYAKFPSLQCQSAPEDAGSVASGTTAVSEEKPAA.

Residues 1-58 are Extracellular-facing; that stretch reads MDPGPGLAALQAWAAKSPAYGAANQTVVDKVPPDMMHMIDPHWYQFPPMNPLWHALLG. Asn-24 is a glycosylation site (N-linked (GlcNAc...) asparagine). The helical transmembrane segment at 59–79 threads the bilayer; the sequence is FTIGVLGFVSISGNGMVIYIF. Residues 80-92 lie on the Cytoplasmic side of the membrane; that stretch reads MSTKSLKTPSNLL. Residues 93 to 113 traverse the membrane as a helical segment; that stretch reads VVNLAFSDFLMMCAMSPAMVV. Over 114 to 129 the chain is Extracellular; it reads NCYYETWVWGPFACEL. A disulfide bridge links Cys-127 with Cys-204. A helical membrane pass occupies residues 130-150; that stretch reads YACAGSLFGCASIWTMTMIAF. At 151-169 the chain is on the cytoplasmic side; the sequence is DRYNVIVKGIAAKPMTSNG. The chain crosses the membrane as a helical span at residues 170–190; it reads ALLRILGIWVFSLAWTLLPFF. Residues 191–220 lie on the Extracellular side of the membrane; that stretch reads GWNRYVPEGNMTACGTDYLSKSWVSRSYIL. An N-linked (GlcNAc...) asparagine glycan is attached at Asn-200. The chain crosses the membrane as a helical span at residues 221 to 241; it reads IYSVFVYFLPLLLIIYSYFFI. Topologically, residues 242-280 are cytoplasmic; it reads VQAVAAHEKAMREQAKKMNVASLRSSEAANTSAECKLAK. Residues 281 to 301 traverse the membrane as a helical segment; it reads VALMTISLWFMAWTPYLVINY. Residues 302 to 312 are Extracellular-facing; sequence TGVFESAPISP. Residues 313–335 form a helical membrane-spanning segment; it reads LATIWGSLFAKANAVYNPIVYGI. Residues 336–377 are Cytoplasmic-facing; that stretch reads SHPKYQAALYAKFPSLQCQSAPEDAGSVASGTTAVSEEKPAA. A disordered region spans residues 357–377; that stretch reads PEDAGSVASGTTAVSEEKPAA.

The protein belongs to the G-protein coupled receptor 1 family. Opsin subfamily. In the retina, expression is abundant and uniform in the anterior-posterior and oblique cells of the retinulae, with some expression in the proximal cells. There is no expression in the dorsal rim retinulae (at protein level).

The protein resides in the cell projection. It localises to the rhabdomere membrane. In terms of biological role, visual pigments are the light-absorbing molecules that mediate vision. They consist of an apoprotein, opsin, covalently linked to cis-retinal. May play a role in photoperiodic photoreception. The chain is Opsin-1 (OP1) from Manduca sexta (Tobacco hawkmoth).